Consider the following 124-residue polypeptide: uncharacterized protein (124 aa).

It is found in the plastid. The protein resides in the chloroplast. This is an uncharacterized protein from Chlamydomonas reinhardtii (Chlamydomonas smithii).